The sequence spans 74 residues: Conotoxin SIIID (74 aa).

Positions 1–20 (MMSKLGVLLTVCLLLFPLTA) are cleaved as a signal peptide. The propeptide occupies 21–53 (LPLDGDQPADQLEDRMQDDISSEQYPSFVRRQK). Cystine bridges form between Cys54–Cys71, Cys55–Cys73, and Cys61–Cys74.

This sequence belongs to the conotoxin M superfamily. Post-translationally, three disulfide isomers have been synthesized and tested. SIIID with the disulfide pairing 1-4;2-5;3-6 is the most active. In terms of tissue distribution, expressed by the venom duct.

Its subcellular location is the secreted. Its function is as follows. The short synthetic peptide SIIID (range 54-74, with disulfide pairing 1-4, 2-5 and 3-6) reversibly inhibits human alpha-7/CHRNA7 acetylcholine receptor (IC(50)=880 nM). Shows a paralytic effect in fish. This is Conotoxin SIIID from Conus striatus (Striated cone).